A 390-amino-acid chain; its full sequence is Transforming growth factor beta-1 proprotein (390 aa).

The first 29 residues, 1–29 (MPPSGLRLLPLLLPLPWLLVLTPGRPAAG), serve as a signal peptide directing secretion. The segment at 30 to 74 (LSTCKTIDMELVKRKRIEAIRGQILSKLRLASPPSQGEVPPGPLP) is straightjacket domain. Positions 75–271 (EAVLALYNST…ATPLERAQHL (197 aa)) are arm domain. 3 N-linked (GlcNAc...) asparagine glycosylation sites follow: N82, N136, and N176. The segment at 226–252 (DSKDNKLHVEINGISPKRRGDLGTIHD) is bowtie tail. Residues 244-246 (RGD) carry the Cell attachment site motif. Cystine bridges form between C285–C294, C293–C356, C322–C387, and C326–C389.

This sequence belongs to the TGF-beta family. In terms of assembly, homodimer; disulfide-linked. Interacts with the serine proteases, HTRA1 and HTRA3: the interaction with either inhibits TGFB1-mediated signaling and the HTRA protease activity is required for this inhibition. May interact with THSD4; this interaction may lead to sequestration by FBN1 microfibril assembly and attenuation of TGFB signaling. Interacts with CD109, DPT and ASPN. Interacts with EFEMP2. Interacts with TSKU; the interaction contributes to regulation of the hair cycle. Interacts with TGFBR3. Homodimer; disulfide-linked. Interacts with transforming growth factor beta-1 (TGF-beta-1) chain; interaction is non-covalent and maintains TGF-beta-1 in a latent state; each latency-associated peptide (LAP) monomer interacts with TGF-beta-1 in the other monomer. Interacts with LTBP1; leading to regulation of TGF-beta-1 activation. Interacts with LRRC32/GARP; leading to regulation of TGF-beta-1 activation on the surface of activated regulatory T-cells (Tregs). Interacts with LRRC33/NRROS; leading to regulation of TGF-beta-1 activation in macrophages and microglia. Interacts (via cell attachment site) with integrins ITGAV and ITGB6 (ITGAV:ITGB6), leading to release of the active TGF-beta-1. Interacts with NREP; the interaction results in a decrease in TGFB1 autoinduction. Interacts with HSP90AB1; inhibits latent TGFB1 activation. As to quaternary structure, homodimer; disulfide-linked. Interacts with TGF-beta receptors (TGFBR1 and TGFBR2), leading to signal transduction. Transforming growth factor beta-1 proprotein: The precursor proprotein is cleaved in the Golgi apparatus by FURIN to form Transforming growth factor beta-1 (TGF-beta-1) and Latency-associated peptide (LAP) chains, which remain non-covalently linked, rendering TGF-beta-1 inactive. In terms of processing, N-glycosylated. Deglycosylation leads to activation of Transforming growth factor beta-1 (TGF-beta-1); mechanisms triggering deglycosylation-driven activation of TGF-beta-1 are however unclear. Expressed in cardiomyocytes. Weakly expressed in the mammary glands, with a slight increase of expression following onset of involution.

It is found in the secreted. It localises to the extracellular space. The protein resides in the extracellular matrix. Its function is as follows. Transforming growth factor beta-1 proprotein: Precursor of the Latency-associated peptide (LAP) and Transforming growth factor beta-1 (TGF-beta-1) chains, which constitute the regulatory and active subunit of TGF-beta-1, respectively. In terms of biological role, required to maintain the Transforming growth factor beta-1 (TGF-beta-1) chain in a latent state during storage in extracellular matrix. Associates non-covalently with TGF-beta-1 and regulates its activation via interaction with 'milieu molecules', such as LTBP1, LRRC32/GARP and LRRC33/NRROS, that control activation of TGF-beta-1. Interaction with LRRC33/NRROS regulates activation of TGF-beta-1 in macrophages and microglia. Interaction with LRRC32/GARP controls activation of TGF-beta-1 on the surface of activated regulatory T-cells (Tregs). Interaction with integrins (ITGAV:ITGB6 or ITGAV:ITGB8) results in distortion of the Latency-associated peptide chain and subsequent release of the active TGF-beta-1. Multifunctional protein that regulates the growth and differentiation of various cell types and is involved in various processes, such as normal development, immune function, microglia function and responses to neurodegeneration. Activation into mature form follows different steps: following cleavage of the proprotein in the Golgi apparatus, Latency-associated peptide (LAP) and Transforming growth factor beta-1 (TGF-beta-1) chains remain non-covalently linked rendering TGF-beta-1 inactive during storage in extracellular matrix. At the same time, LAP chain interacts with 'milieu molecules', such as LTBP1, LRRC32/GARP and LRRC33/NRROS that control activation of TGF-beta-1 and maintain it in a latent state during storage in extracellular milieus. TGF-beta-1 is released from LAP by integrins (ITGAV:ITGB6 or ITGAV:ITGB8): integrin-binding to LAP stabilizes an alternative conformation of the LAP bowtie tail and results in distortion of the LAP chain and subsequent release of the active TGF-beta-1. Once activated following release of LAP, TGF-beta-1 acts by binding to TGF-beta receptors (TGFBR1 and TGFBR2), which transduce signal. While expressed by many cells types, TGF-beta-1 only has a very localized range of action within cell environment thanks to fine regulation of its activation by Latency-associated peptide chain (LAP) and 'milieu molecules'. Plays an important role in bone remodeling: acts as a potent stimulator of osteoblastic bone formation, causing chemotaxis, proliferation and differentiation in committed osteoblasts. Can promote either T-helper 17 cells (Th17) or regulatory T-cells (Treg) lineage differentiation in a concentration-dependent manner. At high concentrations, leads to FOXP3-mediated suppression of RORC and down-regulation of IL-17 expression, favoring Treg cell development. At low concentrations in concert with IL-6 and IL-21, leads to expression of the IL-17 and IL-23 receptors, favoring differentiation to Th17 cells. Stimulates sustained production of collagen through the activation of CREB3L1 by regulated intramembrane proteolysis (RIP). Mediates SMAD2/3 activation by inducing its phosphorylation and subsequent translocation to the nucleus. Positively regulates odontoblastic differentiation in dental papilla cells, via promotion of IPO7-mediated translocation of phosphorylated SMAD2 to the nucleus and subsequent transcription of target genes. Can induce epithelial-to-mesenchymal transition (EMT) and cell migration in various cell types. This chain is Transforming growth factor beta-1 proprotein, found in Mus musculus (Mouse).